The following is a 262-amino-acid chain: Small ribosomal subunit protein uS2 (262 aa).

The interval 223-262 (KSLLEQDGGEQAAGEEVSQDEKDAVVAEAMSEEDFGEDEE) is disordered. Over residues 227–238 (EQDGGEQAAGEE) the composition is skewed to low complexity. The span at 252–262 (MSEEDFGEDEE) shows a compositional bias: acidic residues.

This sequence belongs to the universal ribosomal protein uS2 family.

The sequence is that of Small ribosomal subunit protein uS2 from Campylobacter concisus (strain 13826).